A 552-amino-acid chain; its full sequence is Cilia- and flagella- associated protein 210 (552 aa).

Coiled coils occupy residues 53-143, 186-307, 348-409, and 460-488; these read DEWK…NAKQ, EEQL…KKRL, IARD…VMKA, and TEAL…TTNK. The tract at residues 216–238 is disordered; that stretch reads KDHLKQIKEHEEEEERRKKYEEK.

Microtubule inner protein component of sperm flagellar doublet microtubules. In terms of tissue distribution, expressed in airway epithelial cells.

The protein resides in the cytoplasm. It is found in the cytoskeleton. It localises to the cilium axoneme. Its subcellular location is the flagellum axoneme. In terms of biological role, microtubule inner protein (MIP) part of the dynein-decorated doublet microtubules (DMTs) in cilia axoneme, which is required for motile cilia beating. The polypeptide is Cilia- and flagella- associated protein 210 (Homo sapiens (Human)).